The following is a 457-amino-acid chain: Cell division protein FtsZ (457 aa).

Residues 26–30 (GGGGN), 115–117 (GTG), glutamate 146, lysine 150, and aspartate 193 contribute to the GTP site. A compositionally biased stretch (basic and acidic residues) spans 429 to 447 (KKDVVRSEESERPAFESER). The disordered stretch occupies residues 429 to 457 (KKDVVRSEESERPAFESERSSSPTTISFN). Residues 448–457 (SSSPTTISFN) show a composition bias toward polar residues.

The protein belongs to the FtsZ family. Homodimer. Polymerizes to form a dynamic ring structure in a strictly GTP-dependent manner. Interacts directly with several other division proteins.

The protein resides in the cytoplasm. Its function is as follows. Essential cell division protein that forms a contractile ring structure (Z ring) at the future cell division site. The regulation of the ring assembly controls the timing and the location of cell division. One of the functions of the FtsZ ring is to recruit other cell division proteins to the septum to produce a new cell wall between the dividing cells. Binds GTP and shows GTPase activity. The sequence is that of Cell division protein FtsZ from Porphyromonas gingivalis (strain ATCC BAA-308 / W83).